A 290-amino-acid chain; its full sequence is MDIKEYFARISYGGSYEKPDLETLTEIFQHHIQAVPFENLSIHCGETIELDLAATYDKIVRKKRGGWCMENNHLLSWALKTLGYNVTLLGAKVYIPEHDAYADDIDHLLLKVVLHDKSYIVDGGFGMAYQLWQPMELISGKDQPQTPGIFRFVEENGTWYLEKVKRKQYVPNHSDSAPHNVDKEVCRRVYLFTLQPRDIEEFRARNLHLQTAPDSLFVTKSICSLQTPDGVRALVGWKLTEIKYNYKDNMDLVEIRILADEEMEKTLKEKFNITLDKKFVPINTSRLSLF.

The active-site Acyl-thioester intermediate is the Cys-68. Residues His-107 and Asp-122 contribute to the active site.

Belongs to the arylamine N-acetyltransferase family.

It catalyses the reaction an arylamine + acetyl-CoA = an N-acetylarylamine + CoA. It carries out the reaction an N-hydroxyarylamine + acetyl-CoA = an N-acetoxyarylamine + CoA. Its function is as follows. Catalyzes the N- or O-acetylation of various arylamine and heterocyclic amine substrates, and participates in the detoxification of a plethora of hydrazine and arylamine drugs. The protein is Arylamine N-acetyltransferase, pineal gland isozyme NAT-3 of Gallus gallus (Chicken).